The chain runs to 338 residues: Mitochondrial glutathione transporter SLC25A40 (338 aa).

Solcar repeat units lie at residues 13-131 (VTPL…LTAL), 139-223 (NESR…LKKW), and 233-327 (PTFM…GKSF). 6 helical membrane-spanning segments follow: residues 19–39 (MFAS…FDVV), 103–123 (LWSG…IYFT), 145–165 (IVAG…LELI), 199–220 (WAPT…YEVL), 239–259 (FTSG…FDVV), and 298–318 (GLFT…AVMI).

The protein belongs to the mitochondrial carrier (TC 2.A.29) family.

The protein resides in the mitochondrion inner membrane. It catalyses the reaction glutathione(in) = glutathione(out). Its function is as follows. Probable mitochondrial transporter required for glutathione import into mitochondria. Glutathione, which plays key roles in oxidative metabolism, is produced exclusively in the cytosol and is imported in many organelles. Mitochondrial glutathione is required for the activity and stability of proteins containing iron-sulfur clusters, as well as erythropoiesis. This chain is Mitochondrial glutathione transporter SLC25A40, found in Bos taurus (Bovine).